The sequence spans 765 residues: MVKAISSNLGYPRLGEKREWKRALEKFWNGAISEEELLAETKALRLHALKKQQDKGIDLIPVGDFSFYDQVLDTSVTFGIIPKRFQHDGGKVSLNTYFDIARGKSDAVASEMTKWFNTNYHYIVPELAEADPKVLDNRALYYYEEAKNELGIEGKPVLVGPVTYLKLGKGSDAESFEILLDKFIPAYIEILKELETAGATWVQIDEPYLATSFDKKEIALFEKVYKAFHDAVPNLKIELQTYFESLDYYEEVVNLPVAAVGIDFVHDHGDSIKALKAHGFPQNKYLAAGVIDGRNVWRSDLDAKLALLTDIAHYVAEDKLIVQPSNSLLHVPVTKLSEPDLDEVILGGLSFADQKLDEIAILTKALTEGAESVAAELNEAREAVKALNESSHRNNLEVQAAIANLENVRVDRELPFAERIKLQHEWLKLPLFPTTTIGSFPQSPEVRKTRADWLKGNITDAEYNAFIEKETARWIKIQEDLDIDVLVHGEFERTDMVEYFGQKLAGFQATKFGWVQSYGSRAVRPPLIYGDVAFTEEITVKESVYAQSLTKRPVKGMLTAPVTIINWSFVRDDVPESVVANQVGLALRKEVEALERNGIKVIQVDEPALREGLPLKQARWQKYLDDAVYSFKLTTASVQNDTQIHTHMCYSDFDDIIDTISALDADVISIETSRSHGEIISTFEEVTYDKEIGLGVYDIHSPRVPTVSEIQDNIRRALRAIDAKQFWINPDCGLKTRKEPETIAALQDMIKATKEVRAEYQVLEK.

5-methyltetrahydropteroyltri-L-glutamate-binding positions include 18–21 (REWK) and Lys114. L-homocysteine-binding positions include 437-439 (IGS) and Glu490. Residues 437 to 439 (IGS) and Glu490 contribute to the L-methionine site. 5-methyltetrahydropteroyltri-L-glutamate is bound at residue Trp567. Asp605 provides a ligand contact to L-homocysteine. An L-methionine-binding site is contributed by Asp605. Residue Glu611 participates in 5-methyltetrahydropteroyltri-L-glutamate binding. Zn(2+)-binding residues include His647, Cys649, and Glu671. Residue His700 is the Proton donor of the active site. Cys732 is a Zn(2+) binding site.

It belongs to the vitamin-B12 independent methionine synthase family. Zn(2+) is required as a cofactor.

It catalyses the reaction 5-methyltetrahydropteroyltri-L-glutamate + L-homocysteine = tetrahydropteroyltri-L-glutamate + L-methionine. Its pathway is amino-acid biosynthesis; L-methionine biosynthesis via de novo pathway; L-methionine from L-homocysteine (MetE route): step 1/1. In terms of biological role, catalyzes the transfer of a methyl group from 5-methyltetrahydrofolate to homocysteine resulting in methionine formation. The protein is 5-methyltetrahydropteroyltriglutamate--homocysteine methyltransferase of Listeria innocua serovar 6a (strain ATCC BAA-680 / CLIP 11262).